A 197-amino-acid polypeptide reads, in one-letter code: Heart- and neural crest derivatives-expressed protein 1 (197 aa).

Disordered regions lie at residues 61–94 (VVGPSQTSGRIENLGGKLGRRKGAPPKKERRRTE) and 155–184 (VDGKRRREPQPTEGYWGAAPAGEKKLKGRT). The span at 78-90 (LGRRKGAPPKKER) shows a compositional bias: basic residues. Residues 80-132 (RRKGAPPKKERRRTESINSAFAELRECIPNVPADTKLSKIKTLRLATSYIGYL) form the bHLH domain.

In terms of assembly, efficient DNA binding requires dimerization with another bHLH protein. As to expression, highly expressed in the adult heart and expressed at lower levels in the intestine and gall bladder.

It localises to the nucleus. It is found in the nucleolus. Its function is as follows. Plays an essential role in cardiac morphogenesis. The sequence is that of Heart- and neural crest derivatives-expressed protein 1 (hand1) from Xenopus laevis (African clawed frog).